The chain runs to 192 residues: Adenylate kinase (192 aa).

Residue 10–18 participates in ATP binding; that stretch reads GVPGVGSTT.

Belongs to the archaeal adenylate kinase family. Monomer.

It is found in the cytoplasm. The enzyme catalyses AMP + ATP = 2 ADP. In Methanococcus vannielii (strain ATCC 35089 / DSM 1224 / JCM 13029 / OCM 148 / SB), this protein is Adenylate kinase.